The chain runs to 84 residues: Beta-defensin 119 (84 aa).

The first 21 residues, 1 to 21 (MKFLFLFLAILLATEVPVISG), serve as a signal peptide directing secretion. Disulfide bonds link Cys-28–Cys-55, Cys-35–Cys-49, and Cys-39–Cys-56.

It belongs to the beta-defensin family. Abundant expression in the male reproductive tract only. Expressed abundantly in testis, while expression in epididymis decreased gradually from caput to cauda.

It localises to the secreted. Has antibacterial activity. The chain is Beta-defensin 119 (DEFB119) from Macaca mulatta (Rhesus macaque).